The following is a 511-amino-acid chain: MRRIRIFDTTLRDGEQTPGVNLNIQEKVDIAKQLARLGVDVIEPGFPLTSPGDFEAVQRIAREVEGPYICGFSRAIIRDIDETWKAIKDAQKKCFHIFISSSDIQIKHQLGKTEKDVLEIVKSTVYHAKQYTDEVEYSPMDASRTRLEFLYEVIEAAIDNGATVINIPDTVGYATPIEFGELIQKIRKNVRNIDKAIISVHCHNDLGMAVANSIVAAMNGAQQIECTINGVGERAGNAALEEVVTHIAARKDYLGFETGIDLSQLYKTSKIVSRYMGIPIPVNKPIVGKNVFTHESGIHQDGVLKERSTYEVIDPRLVGRDDSVILLGKHSGRHALKVEAEKLGYDLDEERLNKLFNDFKKLTDVKKNVTTADLESLIIESAAKAVEEAYVLEKIRVVSGNIETPSAKVVIKDSKGNLLEAEQTGNGPVDAVFKAINSVIKETENLTLYKYSVSAVTEEMESLGEVSVTLREKEKLYTGIGTHTDIITSSAIAYIDAINKAIAANARAQKN.

One can recognise a Pyruvate carboxyltransferase domain in the interval 4-266 (IRIFDTTLRD…ETGIDLSQLY (263 aa)). 4 residues coordinate Mn(2+): D13, H201, H203, and N237. A regulatory domain region spans residues 391–511 (VLEKIRVVSG…IAANARAQKN (121 aa)).

Belongs to the alpha-IPM synthase/homocitrate synthase family. LeuA type 1 subfamily. In terms of assembly, homodimer. Requires Mn(2+) as cofactor.

The protein localises to the cytoplasm. The catalysed reaction is 3-methyl-2-oxobutanoate + acetyl-CoA + H2O = (2S)-2-isopropylmalate + CoA + H(+). The protein operates within amino-acid biosynthesis; L-leucine biosynthesis; L-leucine from 3-methyl-2-oxobutanoate: step 1/4. Functionally, catalyzes the condensation of the acetyl group of acetyl-CoA with 3-methyl-2-oxobutanoate (2-ketoisovalerate) to form 3-carboxy-3-hydroxy-4-methylpentanoate (2-isopropylmalate). This is 2-isopropylmalate synthase from Acetivibrio thermocellus (strain ATCC 27405 / DSM 1237 / JCM 9322 / NBRC 103400 / NCIMB 10682 / NRRL B-4536 / VPI 7372) (Clostridium thermocellum).